Here is a 431-residue protein sequence, read N- to C-terminus: Glutamyl-tRNA(Gln) amidotransferase subunit A (431 aa).

Catalysis depends on charge relay system residues Lys-55 and Ser-130. Ser-154 acts as the Acyl-ester intermediate in catalysis.

It belongs to the amidase family. GatA subfamily. As to quaternary structure, heterotrimer of A, B and C subunits.

The catalysed reaction is L-glutamyl-tRNA(Gln) + L-glutamine + ATP + H2O = L-glutaminyl-tRNA(Gln) + L-glutamate + ADP + phosphate + H(+). Allows the formation of correctly charged Gln-tRNA(Gln) through the transamidation of misacylated Glu-tRNA(Gln) in organisms which lack glutaminyl-tRNA synthetase. The reaction takes place in the presence of glutamine and ATP through an activated gamma-phospho-Glu-tRNA(Gln). The protein is Glutamyl-tRNA(Gln) amidotransferase subunit A of Methanococcus maripaludis (strain C6 / ATCC BAA-1332).